The following is a 394-amino-acid chain: Nuclear hormone receptor family member nhr-103 (394 aa).

A DNA-binding region (nuclear receptor) is located at residues 8–83 (SGPCEICGQK…VGMDSKKFQT (76 aa)). The segment at 11–31 (CEICGQKTSGRHFGVLSCRSC) adopts an NR C4-type zinc-finger fold. The NR C4-type; degenerate zinc finger occupies 47–66 (QCVKGTCKIFEDGKFNCKQC). One can recognise an NR LBD domain in the interval 126–394 (YLVDMAKNLL…FSHPEMFETT (269 aa)).

Belongs to the nuclear hormone receptor family.

Its subcellular location is the nucleus. Orphan nuclear receptor. The protein is Nuclear hormone receptor family member nhr-103 (nhr-103) of Caenorhabditis elegans.